Consider the following 251-residue polypeptide: uncharacterized protein (251 aa).

Residues 1–25 (MSAGRLNKKSLGIVMLLSVGLLLAG) form the signal peptide. The N-palmitoyl cysteine moiety is linked to residue Cys-26. The S-diacylglycerol cysteine moiety is linked to residue Cys-26. One can recognise a LysM domain in the interval 40–84 (SVYTVKRGDTLYRISRTTGTSVKELARLNGISPPYTIEVGQKLKL). A compositionally biased stretch (low complexity) spans 93-112 (TRKSTAKSTTKTASVTPSSA). Residues 93–115 (TRKSTAKSTTKTASVTPSSAVPK) form a disordered region.

It belongs to the peptidase M23B family.

The protein localises to the cell inner membrane. This is an uncharacterized protein from Escherichia coli (strain K12).